The following is a 227-amino-acid chain: Protein GrpE (227 aa).

The segment covering 1–18 (MTQGNQKTEGNPPEQVTV) has biased composition (polar residues). Disordered stretches follow at residues 1–57 (MTQG…GAAT) and 193–227 (TEEG…ASGD). Residues 19–35 (TDKRRIDPETGEVRHVP) show a composition bias toward basic and acidic residues. Low complexity-rich tracts occupy residues 41–50 (GGTAPQAATA) and 199–213 (EAAA…AAET).

It belongs to the GrpE family. Homodimer.

It is found in the cytoplasm. Participates actively in the response to hyperosmotic and heat shock by preventing the aggregation of stress-denatured proteins, in association with DnaK and GrpE. It is the nucleotide exchange factor for DnaK and may function as a thermosensor. Unfolded proteins bind initially to DnaJ; upon interaction with the DnaJ-bound protein, DnaK hydrolyzes its bound ATP, resulting in the formation of a stable complex. GrpE releases ADP from DnaK; ATP binding to DnaK triggers the release of the substrate protein, thus completing the reaction cycle. Several rounds of ATP-dependent interactions between DnaJ, DnaK and GrpE are required for fully efficient folding. The sequence is that of Protein GrpE from Mycolicibacterium paratuberculosis (strain ATCC BAA-968 / K-10) (Mycobacterium paratuberculosis).